We begin with the raw amino-acid sequence, 550 residues long: Pectinesterase 2.2 (550 aa).

N-linked (GlcNAc...) asparagine glycosylation occurs at Asn179. Residues Thr312 and Gln342 each coordinate substrate. A disulfide bridge connects residues Cys331 and Cys358. Residue Asp365 is the Proton donor of the active site. Asp386 (nucleophile) is an active-site residue. Cys399 and Cys433 are joined by a disulfide. Arg454 and Trp456 together coordinate substrate.

In the N-terminal section; belongs to the PMEI family. This sequence in the C-terminal section; belongs to the pectinesterase family.

It is found in the secreted. Its subcellular location is the cell wall. The catalysed reaction is [(1-&gt;4)-alpha-D-galacturonosyl methyl ester](n) + n H2O = [(1-&gt;4)-alpha-D-galacturonosyl](n) + n methanol + n H(+). It participates in glycan metabolism; pectin degradation; 2-dehydro-3-deoxy-D-gluconate from pectin: step 1/5. Functionally, pectinesterase may play a role in cell wall metabolism during fruit growth and development prior to ripening and may be required for preparing cell walls for softening by polygalacturonase during fruit ripening. This chain is Pectinesterase 2.2 (PME2.2), found in Solanum lycopersicum (Tomato).